Reading from the N-terminus, the 63-residue chain is Kappa-theraphotoxin-Gr3a (63 aa).

Residues Met-1–Ala-21 form the signal peptide. The propeptide occupies Thr-22–Arg-29. Disulfide bonds link Cys-31–Cys-45, Cys-38–Cys-50, and Cys-44–Cys-57.

Belongs to the neurotoxin 10 (Hwtx-1) family. 63 (VsTx1) subfamily. In terms of tissue distribution, expressed by the venom gland.

It is found in the secreted. In terms of biological role, inhibits sodium channels Nav1.7/SCN9A and potassium channels Kv11.1/KCNH2. Also binds the voltage-sensor domain of the potassium channel KvAP (from the archaeon Aeropyrum pernix) with very slow apparent binding kinetics and affects channel gating. Reaches its target by dynamically partitioning into anionic or zwitterionic headgroup lipid membranes. May bind to the open state of KvAP. This is Kappa-theraphotoxin-Gr3a from Grammostola rosea (Chilean rose tarantula).